Reading from the N-terminus, the 134-residue chain is Holo-[acyl-carrier-protein] synthase (134 aa).

Mg(2+)-binding residues include Asp8 and Glu57.

It belongs to the P-Pant transferase superfamily. AcpS family. Mg(2+) serves as cofactor.

Its subcellular location is the cytoplasm. It catalyses the reaction apo-[ACP] + CoA = holo-[ACP] + adenosine 3',5'-bisphosphate + H(+). Transfers the 4'-phosphopantetheine moiety from coenzyme A to a Ser of acyl-carrier-protein. The protein is Holo-[acyl-carrier-protein] synthase of Rhizobium etli (strain CIAT 652).